Reading from the N-terminus, the 117-residue chain is LIM and senescent cell antigen-like-containing domain protein 3 (117 aa).

Residues 70 to 117 enclose the LIM zinc-binding domain; it reads ATCERCKGGFAPAETIVNSNGELYHEQCFVCAQCFQQFPEGLFYEERT.

As to expression, detected in testis.

Its subcellular location is the cytoplasm. The chain is LIM and senescent cell antigen-like-containing domain protein 3 (LIMS3) from Homo sapiens (Human).